The primary structure comprises 597 residues: MKRIRQPIIAVLGHVDHGKTTLLDRIRRTNVAGKEAGGITQHIGATEVPIETVKNLAGPLIKLWKGEIKLPGLLFIDTPGHEAFTSLRARGGSLADLAVLVVDINEGFQPQTIESIEILRKNRTPFIVAANKIDRIKGWKIEKDEPFLVNIKKQDQRAQQELETKLWELIGKFYEMGFQANRFDRVQNFTRELAIVPISAKYGIGVPELLVLIAGLSQKYLEEKLKIEVEGPARGTILEVREEIGLGTTIDVIIYDGTLHKDDTIVVGGKDKAIVTKIRALLKPKPLDEIRDPRFRFDQVDEVTAAAGVKIAAPGLEEALAGSPVIAARSEEEVEKAKQEILSQIQSVVISTGKVGVIVKADTLGSLEALSKELQEKNIPIRKADVGNISKTDVMEALSVKDEDPKYGVVLGFNVKVNEDAEEVAKARGVPIFTGNIIYKLIEDYEAWVKGEEEKKKRELLSKVTFPGVIRLYPDERYVFRRSHPAIVGIEVVEGRIRPGVTLIKQNGQKVGVIKSIKNRNDFVQEAKKGEAVAIAIEGAIVGRHIHPGETLYVDLSKNDVIILAKQLKNELDETDIKALKMTAKVKAQQDPFWKAV.

Positions isoleucine 4–leucine 221 constitute a tr-type G domain. The segment at glycine 13–threonine 20 is G1. Glycine 13–threonine 20 contributes to the GTP binding site. The G2 stretch occupies residues glycine 38–histidine 42. The segment at aspartate 77–glycine 80 is G3. GTP contacts are provided by residues aspartate 77–histidine 81 and asparagine 131–aspartate 134. Residues asparagine 131–aspartate 134 are G4. Positions serine 199–lysine 201 are G5.

It belongs to the TRAFAC class translation factor GTPase superfamily. Classic translation factor GTPase family. IF-2 subfamily.

Functionally, function in general translation initiation by promoting the binding of the formylmethionine-tRNA to ribosomes. Seems to function along with eIF-2. This chain is Probable translation initiation factor IF-2, found in Thermococcus onnurineus (strain NA1).